Here is a 158-residue protein sequence, read N- to C-terminus: CD-NTase/cGAS isopeptidase (158 aa).

Glu38 functions as the Proton donor/acceptor in the catalytic mechanism. 3 residues coordinate Zn(2+): His100, His102, and Asp113.

This sequence belongs to the peptidase M67B family. Cap3 isopeptidase subfamily.

Its function is as follows. Metalloprotease priming reversal component of a CBASS antivirus system. CBASS (cyclic oligonucleotide-based antiphage signaling system) provides immunity against bacteriophages. The CD-NTase protein synthesizes cyclic nucleotides in response to infection; these serve as specific second messenger signals. The signals activate a diverse range of effectors, leading to bacterial cell death and thus abortive phage infection. A type II-A(GA) CBASS system. Functionally, reverses the primed state of CdnA, the CD-NTase. In terms of biological role, the capV-cdnA-cap2-cap3 operon provides about 10(4)-fold protection in strain BWHPSA011 against infection by phage PaMx41. In P.aeruginosa strain PAO1 it confers protection against phages PaMx41 and JBD18 but not JBD67 (JBD18 and JBD67 do not replicate in BWHPSA011 / Pa011). When acb2 in JBD67 is deleted this CBASS operon then protects against JDB67 also. This CBASS system limits prophage induction of lysogenized JBD67 as well as viral lytic replication. This Pseudomonas aeruginosa (strain BWHPSA011 / Pa011) protein is CD-NTase/cGAS isopeptidase.